The primary structure comprises 583 residues: Scarecrow-like protein 30 (583 aa).

Disordered regions lie at residues 107 to 154 (GDLE…RKSK) and 182 to 205 (EATEKKTRHVKGSSNRYKQQKSDQ). The segment covering 115–124 (GNFSSITSLH) has biased composition (polar residues). The segment covering 131–140 (ESTRRYRHRD) has biased composition (basic and acidic residues). Residues 200-579 (QQKSDQPVDM…RVLYAVSCWK (380 aa)) enclose the GRAS domain. Residues 207–266 (VDMRNLLMQCAQAVASFDQRRAFEKLKEIREHSSRHGDATQRLGYHFAEALEARITGTMT) are leucine repeat I (LRI). The interval 285 to 350 (YKGFVQACPT…IGPPLLRVTG (66 aa)) is VHIID. The short motif at 316–320 (LHIID) is the VHIID element. The segment at 366 to 398 (ETGRRLKRFCDKFNVPFEYSFIAKNWENITLDD) is leucine repeat II (LRII). Residues 407–501 (TVVNCILRLQ…RELIIRDAMS (95 aa)) are PFYRE. Residues 504–579 (ACEGSERFAR…RVLYAVSCWK (76 aa)) form an SAW region.

It belongs to the GRAS family. Interacts with SNRNP35 and CYP95. Expressed in seedlings, leaves, sepals, stamen and pistil, and in the quiescent center of root meristem.

It localises to the nucleus. Probable transcription factor involved in plant development. The sequence is that of Scarecrow-like protein 30 (SCL30) from Arabidopsis thaliana (Mouse-ear cress).